The primary structure comprises 241 residues: GDSL esterase/lipase At5g45920 (241 aa).

S12 serves as the catalytic Nucleophile. Residues D189 and H192 contribute to the active site.

Belongs to the 'GDSL' lipolytic enzyme family.

This Arabidopsis thaliana (Mouse-ear cress) protein is GDSL esterase/lipase At5g45920.